Here is a 1352-residue protein sequence, read N- to C-terminus: Inhibitor of Bruton tyrosine kinase (1352 aa).

2 ANK repeats span residues 51–80 (FGRN…DLLV) and 85–114 (SGWT…SLYM). 3 RCC1 repeats span residues 141–194 (PTEV…FLSQ), 195–246 (KGQV…VLTD), and 248–301 (GCVY…LWTR). One can recognise a BTB 1 domain in the interval 565–645 (HDVTFQVGNR…MYTDTCDLLT (81 aa)). The segment at 692–716 (AHTLSERQKSKPKSSKKGKGVGDDD) is disordered. Basic residues predominate over residues 701 to 710 (SKPKSSKKGK). The BTB 2 domain occupies 769–837 (YDVTMKSVDG…LYTDEAVVIK (69 aa)). The disordered stretch occupies residues 976 to 1002 (FKKAKTRAKKKPRKRSDSSGGYTLSDV). Basic residues predominate over residues 977 to 989 (KKAKTRAKKKPRK). Ser991 is subject to Phosphoserine. Residues 993 to 1002 (SSGGYTLSDV) are compositionally biased toward polar residues. Phosphoserine occurs at positions 1005, 1031, 1034, 1040, 1046, 1055, 1084, 1111, 1113, and 1116. Residues 1032–1094 (EGSYAGVASP…PTTKSAPQFI (63 aa)) are disordered. Positions 1084 to 1094 (SPTTKSAPQFI) are enriched in polar residues.

In terms of assembly, interacts with the PH domain of BTK.

The protein localises to the cytoplasm. It localises to the membrane. In terms of biological role, acts as an inhibitor of BTK tyrosine kinase activity, thereby playing a role in B-cell development. Down-regulates BTK kinase activity, leading to interference with BTK-mediated calcium mobilization and NF-kappa-B-driven transcription. This chain is Inhibitor of Bruton tyrosine kinase (Ibtk), found in Mus musculus (Mouse).